The chain runs to 175 residues: CASP-like protein 2C1 (175 aa).

The Cytoplasmic segment spans residues 1-7 (MVKLRET). The helical transmembrane segment at 8–28 (EVILRLCIVFFLLLTSCLIGL) threads the bilayer. At 29-45 (DSQTKEIAYIHKNVSFR) the chain is on the extracellular side. A glycan (N-linked (GlcNAc...) asparagine) is linked at N41. A helical transmembrane segment spans residues 46 to 66 (YLLALEAELYIDVVVAAYNLV). Residues 67–91 (QLGLGWYNVEQKTSNPKWFSYLLDQ) are Cytoplasmic-facing. A helical transmembrane segment spans residues 92–112 (TAAYVVFAGTSAAAQHSLLVV). The Extracellular portion of the chain corresponds to 113 to 136 (TGSRELQWMKWCYKFTRFCFQMGS). A helical transmembrane segment spans residues 137–157 (AIILNYIAAALMVLLSSISAF). The Cytoplasmic segment spans residues 158 to 175 (NLFRLYSPKRFFRFKSSS).

Belongs to the Casparian strip membrane proteins (CASP) family. In terms of assembly, homodimer and heterodimers.

The protein localises to the cell membrane. This is CASP-like protein 2C1 from Arabidopsis thaliana (Mouse-ear cress).